Consider the following 812-residue polypeptide: Valine--tRNA ligase (812 aa).

Positions 46 to 56 match the 'HIGH' region motif; the sequence is PTVSGQLHIGH. A 'KMSKS' region motif is present at residues 536-540; sequence KMSKS. Lysine 539 serves as a coordination point for ATP.

The protein belongs to the class-I aminoacyl-tRNA synthetase family. ValS type 2 subfamily. In terms of assembly, monomer.

The protein resides in the cytoplasm. It catalyses the reaction tRNA(Val) + L-valine + ATP = L-valyl-tRNA(Val) + AMP + diphosphate. Catalyzes the attachment of valine to tRNA(Val). As ValRS can inadvertently accommodate and process structurally similar amino acids such as threonine, to avoid such errors, it has a 'posttransfer' editing activity that hydrolyzes mischarged Thr-tRNA(Val) in a tRNA-dependent manner. The chain is Valine--tRNA ligase from Rickettsia akari (strain Hartford).